Reading from the N-terminus, the 75-residue chain is uncharacterized protein (75 aa).

A helical transmembrane segment spans residues 12–32 (LKVFILFTGFTALFYYAMIWV).

It is found in the cell membrane. This is an uncharacterized protein from Bacillus subtilis (strain 168).